Consider the following 391-residue polypeptide: 3-ketoacyl-CoA thiolase (391 aa).

The active-site Acyl-thioester intermediate is the Cys95. Catalysis depends on proton acceptor residues His347 and Cys377.

This sequence belongs to the thiolase-like superfamily. Thiolase family. In terms of assembly, heterotetramer of two alpha chains (FadB) and two beta chains (FadA).

The protein localises to the cytoplasm. It catalyses the reaction an acyl-CoA + acetyl-CoA = a 3-oxoacyl-CoA + CoA. It participates in lipid metabolism; fatty acid beta-oxidation. In terms of biological role, catalyzes the final step of fatty acid oxidation in which acetyl-CoA is released and the CoA ester of a fatty acid two carbons shorter is formed. This Pseudomonas aeruginosa (strain ATCC 15692 / DSM 22644 / CIP 104116 / JCM 14847 / LMG 12228 / 1C / PRS 101 / PAO1) protein is 3-ketoacyl-CoA thiolase.